We begin with the raw amino-acid sequence, 476 residues long: 3-isopropylmalate dehydratase large subunit (476 aa).

The [4Fe-4S] cluster site is built by Cys-353, Cys-413, and Cys-416.

Belongs to the aconitase/IPM isomerase family. LeuC type 1 subfamily. As to quaternary structure, heterodimer of LeuC and LeuD. It depends on [4Fe-4S] cluster as a cofactor.

It carries out the reaction (2R,3S)-3-isopropylmalate = (2S)-2-isopropylmalate. It functions in the pathway amino-acid biosynthesis; L-leucine biosynthesis; L-leucine from 3-methyl-2-oxobutanoate: step 2/4. In terms of biological role, catalyzes the isomerization between 2-isopropylmalate and 3-isopropylmalate, via the formation of 2-isopropylmaleate. In Yersinia pseudotuberculosis serotype IB (strain PB1/+), this protein is 3-isopropylmalate dehydratase large subunit.